The chain runs to 274 residues: Glutamate--cysteine ligase regulatory subunit (274 aa).

The residue at position 59 (Ser59) is a Phosphoserine. Lys263 carries the post-translational modification N6-acetyllysine.

This sequence belongs to the aldo/keto reductase family. Glutamate--cysteine ligase light chain subfamily. In terms of assembly, heterodimer of a catalytic heavy chain and a regulatory light chain.

It participates in sulfur metabolism; glutathione biosynthesis; glutathione from L-cysteine and L-glutamate: step 1/2. The sequence is that of Glutamate--cysteine ligase regulatory subunit (GCLM) from Bos taurus (Bovine).